The chain runs to 273 residues: Ribosomal RNA small subunit methyltransferase A (273 aa).

N18, L20, G45, E66, D91, and N113 together coordinate S-adenosyl-L-methionine.

This sequence belongs to the class I-like SAM-binding methyltransferase superfamily. rRNA adenine N(6)-methyltransferase family. RsmA subfamily.

The protein resides in the cytoplasm. It carries out the reaction adenosine(1518)/adenosine(1519) in 16S rRNA + 4 S-adenosyl-L-methionine = N(6)-dimethyladenosine(1518)/N(6)-dimethyladenosine(1519) in 16S rRNA + 4 S-adenosyl-L-homocysteine + 4 H(+). Functionally, specifically dimethylates two adjacent adenosines (A1518 and A1519) in the loop of a conserved hairpin near the 3'-end of 16S rRNA in the 30S particle. May play a critical role in biogenesis of 30S subunits. The sequence is that of Ribosomal RNA small subunit methyltransferase A from Enterobacter sp. (strain 638).